The primary structure comprises 415 residues: Coenzyme F420 hydrogenase subunit alpha (415 aa).

Ni(2+) contacts are provided by Cys68, Cys71, Cys391, and Cys394.

Belongs to the [NiFe]/[NiFeSe] hydrogenase large subunit family. Heterocomplex of the form (alpha(1)beta(1)gamma(1))(8). Requires Ni(2+) as cofactor. Iron-sulfur cluster is required as a cofactor. It depends on FAD as a cofactor.

It catalyses the reaction oxidized coenzyme F420-(gamma-L-Glu)(n) + H2 + H(+) = reduced coenzyme F420-(gamma-L-Glu)(n). Its function is as follows. Reduces the physiological low-potential two-electron acceptor coenzyme F420, and the artificial one-electron acceptor methylviologen. The protein is Coenzyme F420 hydrogenase subunit alpha (frhA) of Methanocaldococcus jannaschii (strain ATCC 43067 / DSM 2661 / JAL-1 / JCM 10045 / NBRC 100440) (Methanococcus jannaschii).